Reading from the N-terminus, the 242-residue chain is 1-(5-phosphoribosyl)-5-[(5-phosphoribosylamino)methylideneamino] imidazole-4-carboxamide isomerase (242 aa).

Aspartate 8 acts as the Proton acceptor in catalysis. Catalysis depends on aspartate 129, which acts as the Proton donor.

This sequence belongs to the HisA/HisF family.

The protein resides in the cytoplasm. The catalysed reaction is 1-(5-phospho-beta-D-ribosyl)-5-[(5-phospho-beta-D-ribosylamino)methylideneamino]imidazole-4-carboxamide = 5-[(5-phospho-1-deoxy-D-ribulos-1-ylimino)methylamino]-1-(5-phospho-beta-D-ribosyl)imidazole-4-carboxamide. Its pathway is amino-acid biosynthesis; L-histidine biosynthesis; L-histidine from 5-phospho-alpha-D-ribose 1-diphosphate: step 4/9. In Clostridium botulinum (strain Langeland / NCTC 10281 / Type F), this protein is 1-(5-phosphoribosyl)-5-[(5-phosphoribosylamino)methylideneamino] imidazole-4-carboxamide isomerase.